The primary structure comprises 394 residues: MLSENTINIVKSTAPLLAETGPKLTAHFYQRMFEHNPELKDIFNMSNQRNGDQREALFNAICAYASNIDNLPALLGAVEKIAHKHSSFLITADQYQIVGGHLLATIDELFSPGQAVLDAWAEAYGVLANVFIQREEQIYQDNQSQTGGWRGLREFELVEKQYESAHICSFVFKPVDGGSVVSFKPGQYLGIYINDEQFENQEIRQYSLSSSVRPDCYRISVKREEGGRVSNYLHDHLDVGSKVKLAAPAGDFFLDAAPTAPVVLISAGVGLTPTLSMLESLTEHQAPVTWIHATENGQQHAFKQHVKQLVETHPHFNSLVWYNQPNSDDKIGDDFQFSGWVNLHEIETVLKQADVQVYFCGPVGFMQFIAKQLLEMGVPEQQFHYECFGPHKVV.

Positions 1–136 (MLSENTINIV…LANVFIQREE (136 aa)) constitute a Globin domain. Histidine 85 contributes to the heme b binding site. Residues tyrosine 95 and glutamate 135 each act as charge relay system in the active site. Residues 147–394 (GGWRGLREFE…YECFGPHKVV (248 aa)) are reductase. The FAD-binding FR-type domain maps to 150-255 (RGLREFELVE…AAPAGDFFLD (106 aa)). FAD-binding positions include tyrosine 188 and 204 to 207 (RQYS). 268–273 (GVGLTP) contributes to the NADP(+) binding site. 387–390 (CFGP) contributes to the FAD binding site.

The protein belongs to the globin family. Two-domain flavohemoproteins subfamily. It in the C-terminal section; belongs to the flavoprotein pyridine nucleotide cytochrome reductase family. It depends on heme b as a cofactor. FAD is required as a cofactor.

It catalyses the reaction 2 nitric oxide + NADPH + 2 O2 = 2 nitrate + NADP(+) + H(+). The enzyme catalyses 2 nitric oxide + NADH + 2 O2 = 2 nitrate + NAD(+) + H(+). Is involved in NO detoxification in an aerobic process, termed nitric oxide dioxygenase (NOD) reaction that utilizes O(2) and NAD(P)H to convert NO to nitrate, which protects the bacterium from various noxious nitrogen compounds. Therefore, plays a central role in the inducible response to nitrosative stress. The polypeptide is Flavohemoprotein (Vibrio vulnificus (strain CMCP6)).